Consider the following 406-residue polypeptide: Gustatory receptor for sugar taste 64b (406 aa).

At 1-47 (MPQGETFHRAVSNVLFISQIYGLLPVSNVRALDVADIRFRWCSPRIL) the chain is on the cytoplasmic side. The chain crosses the membrane as a helical span at residues 48–68 (YSLLIGILNLSEFGAVINYVI). Over 69–79 (KVTINFHTSST) the chain is Extracellular. The chain crosses the membrane as a helical span at residues 80 to 100 (LSLYIVCLLEHLFFWRLAIQW). The Cytoplasmic segment spans residues 101–130 (PRIMRTWHGVEQLFLRVPYRFYGEYRIKRR). The helical transmembrane segment at 131-151 (IYIVFTIVMSSALVEHCLLLG) threads the bilayer. The Extracellular portion of the chain corresponds to 152–183 (NSFHLSNMERTQCKINVTYFESIYKWERPHLY). Residue Asn167 is glycosylated (N-linked (GlcNAc...) asparagine). Residues 184 to 204 (MILPYHFWMLPILEWVNQTIA) traverse the membrane as a helical segment. Topologically, residues 205 to 265 (YPRSFTDCFI…KRLVHLLDAA (61 aa)) are cytoplasmic. The helical transmembrane segment at 266-286 (IAPLVLLAFGNNMSFICFQLF) threads the bilayer. The Extracellular portion of the chain corresponds to 287-290 (NSFK). The helical transmembrane segment at 291-311 (NIGVDFLVMLAFWYSLGFAVV) threads the bilayer. Topologically, residues 312–370 (RTLLTIFVASSINDYERKIVTALRDVPSRAWSIEVQRFSEQLGNDTTALSGSGFFYLTR) are cytoplasmic. Residues 371–391 (SLVLAMGTTIITYELMISDVI) form a helical membrane-spanning segment. Topologically, residues 392–406 (NQGSIRQKTQYCREY) are extracellular.

It belongs to the insect chemoreceptor superfamily. Gustatory receptor (GR) family. Gr5a subfamily. In terms of tissue distribution, expressed in Gr5a-expressing sugar-sensing cells.

It localises to the cell membrane. One of the few identified sugar gustatory receptors identified so far and which promotes the starvation-induced increase of feeding motivation. This is Gustatory receptor for sugar taste 64b (Gr64b) from Drosophila melanogaster (Fruit fly).